A 195-amino-acid chain; its full sequence is Nuclear transcription factor Y subunit C-10 (195 aa).

The interval 1 to 24 (MRRPKSSHVRMEPVAPRSHNTMPM) is disordered.

The protein belongs to the NFYC/HAP5 subunit family. Heterotrimeric transcription factor composed of three components, NF-YA, NF-YB and NF-YC. NF-YB and NF-YC must interact and dimerize for NF-YA association and DNA binding.

Its subcellular location is the nucleus. In terms of biological role, stimulates the transcription of various genes by recognizing and binding to a CCAAT motif in promoters. In Arabidopsis thaliana (Mouse-ear cress), this protein is Nuclear transcription factor Y subunit C-10 (NFYC10).